The chain runs to 440 residues: Probable exopolygalacturonase C (440 aa).

The first 21 residues, 1–21 (MLITNPALLGILASLAPLALG), serve as a signal peptide directing secretion. N24, N84, N151, and N219 each carry an N-linked (GlcNAc...) asparagine glycan. PbH1 repeat units follow at residues 217–238 (GTNI…AVNT) and 240–261 (SHNI…SIGS). The active-site Proton donor is D231. The active site involves H255. A glycan (N-linked (GlcNAc...) asparagine) is linked at N271. The PbH1 3 repeat unit spans residues 272–293 (ITNLRFEDVTVIDALYAARFKS). N-linked (GlcNAc...) asparagine glycosylation is found at N313 and N350. C389 and C395 are disulfide-bonded. The N-linked (GlcNAc...) asparagine glycan is linked to N434.

Belongs to the glycosyl hydrolase 28 family.

It is found in the secreted. The catalysed reaction is [(1-&gt;4)-alpha-D-galacturonosyl](n) + H2O = alpha-D-galacturonate + [(1-&gt;4)-alpha-D-galacturonosyl](n-1). In terms of biological role, specific in hydrolyzing the terminal glycosidic bond of polygalacturonic acid and oligogalacturonates. This Neosartorya fischeri (strain ATCC 1020 / DSM 3700 / CBS 544.65 / FGSC A1164 / JCM 1740 / NRRL 181 / WB 181) (Aspergillus fischerianus) protein is Probable exopolygalacturonase C (pgxC).